Reading from the N-terminus, the 322-residue chain is Exosome complex component RRP4 homolog (322 aa).

The S1 motif domain occupies 94-172 (GDIVVGRVIE…HDGSLQLQAR (79 aa)). One can recognise a KH domain in the interval 182–237 (GQLLKVDPYLVKRSKHHFHYVESLGIDLIIGCNGFIWVGEHVEVRDPMAIDDQKDE).

It belongs to the RRP4 family. Component of the RNA exosome complex. Interacts with RPP41. As to expression, expressed in roots, stems, rosette and cauline leaves, flowers and siliques.

The protein localises to the cytoplasm. It is found in the nucleus. It localises to the nucleolus. In terms of biological role, non-catalytic component of the RNA exosome complex which has 3'-&gt;5' exoribonuclease activity and participates in a multitude of cellular RNA processing, maturation and degradation events. In vitro, is an active and distributive 3'-&gt;5' exonuclease requiring a free 3'-OH on the substrate and releasing nucleoside 5'-monophosphates. Required for normal embryo development. The sequence is that of Exosome complex component RRP4 homolog from Arabidopsis thaliana (Mouse-ear cress).